Consider the following 401-residue polypeptide: Anhydro-N-acetylmuramic acid kinase (401 aa).

An ATP-binding site is contributed by 25–32; sequence GTSLDGLD.

The protein belongs to the anhydro-N-acetylmuramic acid kinase family.

It carries out the reaction 1,6-anhydro-N-acetyl-beta-muramate + ATP + H2O = N-acetyl-D-muramate 6-phosphate + ADP + H(+). Its pathway is amino-sugar metabolism; 1,6-anhydro-N-acetylmuramate degradation. The protein operates within cell wall biogenesis; peptidoglycan recycling. Its function is as follows. Catalyzes the specific phosphorylation of 1,6-anhydro-N-acetylmuramic acid (anhMurNAc) with the simultaneous cleavage of the 1,6-anhydro ring, generating MurNAc-6-P. Is required for the utilization of anhMurNAc either imported from the medium or derived from its own cell wall murein, and thus plays a role in cell wall recycling. This chain is Anhydro-N-acetylmuramic acid kinase, found in Pseudoalteromonas atlantica (strain T6c / ATCC BAA-1087).